The chain runs to 466 residues: 3-isopropylmalate dehydratase large subunit (466 aa).

The [4Fe-4S] cluster site is built by cysteine 346, cysteine 406, and cysteine 409.

Belongs to the aconitase/IPM isomerase family. LeuC type 1 subfamily. Heterodimer of LeuC and LeuD. The cofactor is [4Fe-4S] cluster.

The catalysed reaction is (2R,3S)-3-isopropylmalate = (2S)-2-isopropylmalate. It participates in amino-acid biosynthesis; L-leucine biosynthesis; L-leucine from 3-methyl-2-oxobutanoate: step 2/4. Functionally, catalyzes the isomerization between 2-isopropylmalate and 3-isopropylmalate, via the formation of 2-isopropylmaleate. This chain is 3-isopropylmalate dehydratase large subunit, found in Alteromonas mediterranea (strain DSM 17117 / CIP 110805 / LMG 28347 / Deep ecotype).